Reading from the N-terminus, the 145-residue chain is MEFPDLGKHCSEKTCKQLDFLPVKCDACKQDFCKDHFPYAAHKCPFAFQKDVHVPVCPLCNTPIPVKKGQIPDVVVGDHIDRDCDSHPGKKKEKIFTYRCSKEGCKKKEMLQMVCAQCHGNFCIQHRHPLDHSCRHGSRPTIKAG.

AN1-type zinc fingers lie at residues 4–52 (PDLG…QKDV) and 94–142 (KIFT…RPTI). Cys10, Cys15, Cys25, Cys28, Cys33, His36, His42, Cys44, Cys100, Cys105, Cys115, Cys118, Cys123, His126, His132, and Cys134 together coordinate Zn(2+).

The protein localises to the cytoplasm. It is found in the nucleus. This is AN1-type zinc finger protein 2A (ZFAND2A) from Homo sapiens (Human).